The chain runs to 122 residues: Secreted RxLR effector protein 80 (122 aa).

An N-terminal signal peptide occupies residues 1-21; that stretch reads MKKRALPIVIFVISLQQSSQS. Positions 72-75 match the RxLR motif; the sequence is RSLR.

This sequence belongs to the RxLR effector family.

The protein resides in the secreted. It is found in the host endoplasmic reticulum membrane. Secreted effector that dos not suppress the host cell death induced by cell death-inducing proteins. This chain is Secreted RxLR effector protein 80, found in Plasmopara viticola (Downy mildew of grapevine).